The chain runs to 141 residues: NADPH-dependent 7-cyano-7-deazaguanine reductase (141 aa).

C56 functions as the Thioimide intermediate in the catalytic mechanism. D63 serves as the catalytic Proton donor. Substrate contacts are provided by residues 78–80 (VEL) and 97–98 (HE).

Belongs to the GTP cyclohydrolase I family. QueF type 1 subfamily.

Its subcellular location is the cytoplasm. It catalyses the reaction 7-aminomethyl-7-carbaguanine + 2 NADP(+) = 7-cyano-7-deazaguanine + 2 NADPH + 3 H(+). It functions in the pathway tRNA modification; tRNA-queuosine biosynthesis. In terms of biological role, catalyzes the NADPH-dependent reduction of 7-cyano-7-deazaguanine (preQ0) to 7-aminomethyl-7-deazaguanine (preQ1). This is NADPH-dependent 7-cyano-7-deazaguanine reductase from Trichodesmium erythraeum (strain IMS101).